Consider the following 223-residue polypeptide: MTIAKMIDHTALKPDTTKEQILTLTKEAREYGFASVCVNPTWVKLSAEQLSGAESVVCTVIGFPLGANTPEVKAFEVKNAIENGAKEVDMVINIGALKDKDDELVERDIRAVVDAAKGKALVKVIIETCLLTDEEKVRACEIAVKAGTDFVKTSTGFSTGGATAEDIALMRKTVGPNIGVKASGGVRTKEDVEKMIEAGATRIGASAGVAIVSGEKPAKPDNY.

Catalysis depends on Asp-89, which acts as the Proton donor/acceptor. Lys-152 (schiff-base intermediate with acetaldehyde) is an active-site residue. The Proton donor/acceptor role is filled by Lys-181.

This sequence belongs to the DeoC/FbaB aldolase family. DeoC type 1 subfamily.

It is found in the cytoplasm. The enzyme catalyses 2-deoxy-D-ribose 5-phosphate = D-glyceraldehyde 3-phosphate + acetaldehyde. The protein operates within carbohydrate degradation; 2-deoxy-D-ribose 1-phosphate degradation; D-glyceraldehyde 3-phosphate and acetaldehyde from 2-deoxy-alpha-D-ribose 1-phosphate: step 2/2. In terms of biological role, catalyzes a reversible aldol reaction between acetaldehyde and D-glyceraldehyde 3-phosphate to generate 2-deoxy-D-ribose 5-phosphate. This chain is Deoxyribose-phosphate aldolase, found in Listeria innocua serovar 6a (strain ATCC BAA-680 / CLIP 11262).